Here is a 328-residue protein sequence, read N- to C-terminus: Deoxynucleotidyltransferase terminal-interacting protein 1 (328 aa).

Disordered stretches follow at residues 1 to 30 and 142 to 176; these read MGATGDTEQPRGPGGAERGGLELGDAGAAG and ELPGIKRGRQAEEESHRGSPIPKKRKGRPPGHVLS. Over residues 12-22 the composition is skewed to gly residues; sequence GPGGAERGGLE. Residues 56–147 form an important for dimerization region; sequence MTTSFTDPAI…RLAHELPGIK (92 aa). Positions 142–158 are enriched in basic and acidic residues; sequence ELPGIKRGRQAEEESHR. Residues 158–172 constitute a DNA-binding region (a.T hook); that stretch reads RGSPIPKKRKGRPPG. The residue at position 160 (Ser-160) is a Phosphoserine. The Nuclear localization signal signature appears at 163–169; sequence PKKRKGR. The tract at residues 196–315 is important for DNA and nucleosome binding; it reads REGPKWDPAR…MRKYMETLRT (120 aa). The H-T-H motif DNA-binding region spans 215–236; it reads GSRANKALGMGGTRGRIYIKHP.

As to quaternary structure, monomer and homodimer. A minor proportion may form homotrimers. Interacts with ZNF541. Interacts with the terminal deoxynucleotidyltransferase DNTT. Interacts with TRERF1. Identified in a histone deacetylase complex that contains DNTTIP1, HDAC1 and MIDEAS; this complex assembles into a tetramer that contains four copies of each protein chain. Component of a histone deacetylase complex containing DNTTIP1, ZNF541, HDAC1 and HDAC2. Identified in a complex with KCTD19, HDAC1, HDAC2 and ZNF541.

Its subcellular location is the nucleus. Functionally, increases DNTT terminal deoxynucleotidyltransferase activity (in vitro). Also acts as a transcriptional regulator, binding to the consensus sequence 5'-GNTGCATG-3' following an AT-tract. Associates with RAB20 promoter and positively regulates its transcription. Binds DNA and nucleosomes; may recruit HDAC1 complexes to nucleosomes or naked DNA. The protein is Deoxynucleotidyltransferase terminal-interacting protein 1 (Dnttip1) of Mus musculus (Mouse).